The following is a 663-amino-acid chain: Ankyrin repeat and SAM domain-containing protein 3 (663 aa).

The interaction with NEK7 stretch occupies residues 1-421 (MSELSDEASE…PGSEPQAEKS (421 aa)). Phosphoserine occurs at positions 2 and 5. ANK repeat units lie at residues 34–64 (DVPLDLHTAASIGQYEVVKECVQRRELDLNK), 68–97 (GGWTPLMYASYIGHDTIVHLLLEAGVSVNV), 101–130 (EGQTPLMLASSCGNESIAYFLLQQGAELEM), 134–163 (QGWTALFHCTSAGHQQMVKFLLESGANANV), 168–197 (YGFTPLMEAAAAGHEIIVQYFLNHGVKVDT), and 201–220 (SGATARMLAKQYGHMKIVAL). Position 96 is a 3-hydroxyasparagine (Asn96). 5 positions are modified to phosphoserine: Ser201, Ser225, Ser243, Ser244, and Ser245. Disordered regions lie at residues 242-261 (LSSSDESWPVPQRQRPCRKK) and 278-425 (TGLG…PYSG). Thr318 carries the post-translational modification Phosphothreonine. Residue Ser319 is modified to Phosphoserine. The segment covering 322 to 337 (NERDVESSSSSSREEP) has biased composition (basic and acidic residues). Phosphoserine is present on residues Ser366, Ser369, and Ser373. The segment covering 378–395 (KSSVRKQTRTYLKNKSRH) has biased composition (basic residues). Residues 424–487 (SGPQDLATLL…TSAIARWHSS (64 aa)) form the SAM domain. A coiled-coil region spans residues 500 to 575 (ADRLEAEMQE…AALVLDQLRA (76 aa)). Phosphoserine is present on Ser540. 2 disordered regions span residues 585–604 (KQHHSPSEATQNPPFLPADS) and 637–663 (AEPGETTDAEWEEMEGTIARRDDSDVG). Positions 641–651 (ETTDAEWEEME) are enriched in acidic residues. The span at 654–663 (IARRDDSDVG) shows a compositional bias: basic and acidic residues.

As to quaternary structure, homooligomer. Interacts (via SAM domain) with ANKS6 (via SAM domain). Interacts with BICC1. Interacts with NPHP1. Interacts with NEK8. Interacts with HIF1AN. Interacts with NEK7; this interaction alters the subcellular distribution of NEK7 by preventing its nuclear translocation. Hydroxylated at Asn-96, most probably by HIF1AN. In terms of processing, phosphorylations at Ser-5, Ser-225, Thr-318, Ser-319, Ser-366 and Ser-369 occur in a NEK7-dependent manner. Post-translationally, polyubiquitinated.

It localises to the cell projection. The protein localises to the cilium. It is found in the cytoplasm. May be involved in vasopressin signaling in the kidney. The polypeptide is Ankyrin repeat and SAM domain-containing protein 3 (Anks3) (Rattus norvegicus (Rat)).